Here is a 46-residue protein sequence, read N- to C-terminus: Apamin (46 aa).

The signal sequence occupies residues 1–27 (MISMLRCIYLFLSVILITSYFVTPVMP). 2 disulfide bridges follow: Cys28/Cys38 and Cys30/Cys42. Residues 40-41 (RR) are essential for toxin activity. Histidine amide is present on His45.

Expressed by the venom gland.

The protein localises to the secreted. Toxin with unique selectivity to KCa2 channels. Potently blocks human, rat and mouse KCa2.2/KCNN2/SK2 channels (IC(50)=27-140 pM), and moderately blocks human and rat KCa2.3/KCNN3/SK3 channels (IC(50)=0.6-4 nM), and human (IC(50)=0.7-12 nM) and mouse (IC(50)=28 nM) KCa2.1/KCNN1/SK1 channels. Does not show any antimicrobial activity. In vivo, intracerebroventricular injection into rats of a dose of 1 ng results in neurodegeneration specifically in the Purkinje cells of the cerebellum, and induces seizures characterized by hypersensitivity to noise, loss of postural control, paroxystic jerking, and alternating periods of great agitation with tonic-clonic convulsions and periods of total prostration. When administered at high doses, exerts anti-inflammatory, anti-oxidative, anti-fibrotic and anti-apoptotic properties in several models of inflammatory disease, including gouty arthritis, atherosclerosis, atopic dermatitis and acute kidney injury. Down-regulates pro-inflammatory signaling pathways, such as the NF-kappaB and STAT3 pathways, probably by blocking SK channels such as KCa2.2/KCNN2/SK2 and/or KCa2.3/KCNN3/SK3 which are thought to be involved in promoting some inflammatory responses. For example in mouse and rat microglia cells, inhibits LPS-activated KCa2.2/KCNN2/SK2 channels and TLR4 expression leading to the down-regulation of the NF-kappaB, STAT, and MAPK/ERK signaling pathways and, as a consequence, decreases secretion of pro-inflammatory cytokines. The polypeptide is Apamin (Apis mellifera (Honeybee)).